Here is a 298-residue protein sequence, read N- to C-terminus: MTDLHTDVERYLRYLSVERQLSPITLLNYQRQLEAIINFASENGLQSWQQCDAAMVRNFAVRSRRKGLGAASLALRLSALRSFFDWLVSQNELKANPAKGVSAPKAPRHLPKNIDVDDMNRLLDIDINDPLAVRDRAMLEVMYGAGLRLSELVGLDIKHLDLESGEVWVMGKGSKERRLPIGRNAVAWIEHWLDLRDLFGSEDDALFLSKLGKRISARNVQKRFAEWGIKQGLNNHVHPHKLRHSFATHMLESSGDLRGVQELLGHANLSTTQIYTHLDFQHLASVYDAAHPRAKRGK.

Residues 2–88 form the Core-binding (CB) domain; it reads TDLHTDVERY…ALRSFFDWLV (87 aa). Residues 109-288 form the Tyr recombinase domain; the sequence is HLPKNIDVDD…DFQHLASVYD (180 aa). Active-site residues include Arg148, Lys172, His240, Arg243, and His266. Tyr275 functions as the O-(3'-phospho-DNA)-tyrosine intermediate in the catalytic mechanism.

The protein belongs to the 'phage' integrase family. XerC subfamily. As to quaternary structure, forms a cyclic heterotetrameric complex composed of two molecules of XerC and two molecules of XerD, in which XerC interacts with XerD via its C-terminal region, XerD interacts with XerC via its C-terminal region and so on.

It localises to the cytoplasm. FtsK may regulate the catalytic switch between XerC and XerD in the heterotetrameric complex during the two steps of the recombination process. Its function is as follows. Site-specific tyrosine recombinase, which acts by catalyzing the cutting and rejoining of the recombining DNA molecules. Binds cooperatively to specific DNA consensus sequences that are separated from XerD binding sites by a short central region, forming the heterotetrameric XerC-XerD complex that recombines DNA substrates. The complex is essential to convert dimers of the bacterial chromosome into monomers to permit their segregation at cell division. It also contributes to the segregational stability of plasmids. In the complex XerC specifically exchanges the top DNA strands. The sequence is that of Tyrosine recombinase XerC from Shigella dysenteriae serotype 1 (strain Sd197).